We begin with the raw amino-acid sequence, 467 residues long: ATP synthase subunit beta (467 aa).

ATP is bound at residue 154–161; sequence GGAGVGKT.

Belongs to the ATPase alpha/beta chains family. As to quaternary structure, F-type ATPases have 2 components, CF(1) - the catalytic core - and CF(0) - the membrane proton channel. CF(1) has five subunits: alpha(3), beta(3), gamma(1), delta(1), epsilon(1). CF(0) has three main subunits: a(1), b(2) and c(9-12). The alpha and beta chains form an alternating ring which encloses part of the gamma chain. CF(1) is attached to CF(0) by a central stalk formed by the gamma and epsilon chains, while a peripheral stalk is formed by the delta and b chains.

It is found in the cell inner membrane. The catalysed reaction is ATP + H2O + 4 H(+)(in) = ADP + phosphate + 5 H(+)(out). Produces ATP from ADP in the presence of a proton gradient across the membrane. The catalytic sites are hosted primarily by the beta subunits. The sequence is that of ATP synthase subunit beta from Leptospira borgpetersenii serovar Hardjo-bovis (strain JB197).